The following is an 860-amino-acid chain: MYMSTDEVRNAFLKFFESKGHQIVDSSSLVPHNDPTLLFTNAGMNQFKDCFLGAEKRAYTRATTAQRCVRAGGKHNDLENVGFTARHHTFFEMLGNFSFGDYFKEDAIAFAWEFLTETLKLPKDRLLVTVYETDDEAFDIWNQKVGVPADRIIRIGDKKGGKQYESDNFWTMGDTGPCGPCTEIFYDHGEHIWGGRPGTPEEDGDRFIEIWNNVFMQFNRHADGTMEPLPKPSVDTGMGIERISAIMQGVHSNYEIDVFQKLIKATAEIVGCEDLSNQSLRVIADHIRSCSFLIADGVMPSNEGRGYVLRRIIRRAVRHGNKLGAQGVFFHKLVGVLAEVMGSAADELKKQQAVVEKVLRIEEENFGRTLERGMVILNEALDALEGKELDGETVFKLYDTYGFPADLTNDVARERDFTIDEAGFEKAMEEQRQRAREAGQFGTDYNAKIKVDAQSEFCGYTSTQERSDVVALFVEGEETATLSAGDKAIVILQETPFYAESGGQCGDSGVLKTESGLFQVEDTQKLGNAIAHHGVLVEGVLAKGDQVTAIVDAERRAAISLNHSATHLLHAALRQVLGEHVAQKGSLVKAENLRFDFSHLEAVTAAELKEVERLVNAQIRRNHTIETNIMDIESAKQKGAMALFGEKYDDEVRVLSMGDFSTELCGGIHASNTGDIGLFKITSEGGIAAGIRRIEAVTGEAALEAIDAQARKFEEKLQDAANKAKSLEKEIQQLKDKLASQASANLIDQVKEIAGVKVLVAKLDGADNKALRGMVDELKNQMGSGIIMLGNVADDKVGLIAGVTQDLTSKVKAGELVNMVAQQVGGKGGGRPDMAQAGGTDSSALPSALASVDAWIAERL.

Positions 563, 567, 665, and 669 each coordinate Zn(2+). The tract at residues V824–S843 is disordered.

Belongs to the class-II aminoacyl-tRNA synthetase family. Zn(2+) is required as a cofactor.

The protein resides in the cytoplasm. It carries out the reaction tRNA(Ala) + L-alanine + ATP = L-alanyl-tRNA(Ala) + AMP + diphosphate. Catalyzes the attachment of alanine to tRNA(Ala) in a two-step reaction: alanine is first activated by ATP to form Ala-AMP and then transferred to the acceptor end of tRNA(Ala). Also edits incorrectly charged Ser-tRNA(Ala) and Gly-tRNA(Ala) via its editing domain. The chain is Alanine--tRNA ligase from Vibrio vulnificus (strain YJ016).